The chain runs to 180 residues: GTP cyclohydrolase 1 (180 aa).

Residues cysteine 71, histidine 74, and cysteine 142 each contribute to the Zn(2+) site.

It belongs to the GTP cyclohydrolase I family. In terms of assembly, homomer.

The enzyme catalyses GTP + H2O = 7,8-dihydroneopterin 3'-triphosphate + formate + H(+). Its pathway is cofactor biosynthesis; 7,8-dihydroneopterin triphosphate biosynthesis; 7,8-dihydroneopterin triphosphate from GTP: step 1/1. The sequence is that of GTP cyclohydrolase 1 from Helicobacter pylori (strain G27).